Here is a 361-residue protein sequence, read N- to C-terminus: Histidinol-phosphate aminotransferase (361 aa).

The segment at 26–45 is disordered; the sequence is GMDPEDLTKLSSNENPHGPS. Lysine 222 bears the N6-(pyridoxal phosphate)lysine mark.

Belongs to the class-II pyridoxal-phosphate-dependent aminotransferase family. Histidinol-phosphate aminotransferase subfamily. Pyridoxal 5'-phosphate serves as cofactor.

The enzyme catalyses L-histidinol phosphate + 2-oxoglutarate = 3-(imidazol-4-yl)-2-oxopropyl phosphate + L-glutamate. The protein operates within amino-acid biosynthesis; L-histidine biosynthesis; L-histidine from 5-phospho-alpha-D-ribose 1-diphosphate: step 7/9. The sequence is that of Histidinol-phosphate aminotransferase (hisC) from Haloferax volcanii (strain ATCC 29605 / DSM 3757 / JCM 8879 / NBRC 14742 / NCIMB 2012 / VKM B-1768 / DS2) (Halobacterium volcanii).